Consider the following 620-residue polypeptide: Arginine--tRNA ligase (620 aa).

Positions 147 to 157 (ANPTGPIHIGG) match the 'HIGH' region motif.

The protein belongs to the class-I aminoacyl-tRNA synthetase family. In terms of assembly, monomer.

It is found in the cytoplasm. The catalysed reaction is tRNA(Arg) + L-arginine + ATP = L-arginyl-tRNA(Arg) + AMP + diphosphate. The chain is Arginine--tRNA ligase from Bifidobacterium longum subsp. infantis (strain ATCC 15697 / DSM 20088 / JCM 1222 / NCTC 11817 / S12).